Here is a 236-residue protein sequence, read N- to C-terminus: Auxin-responsive protein IAA13 (236 aa).

Disordered stretches follow at residues 1–24 (MAGA…GGAA), 52–93 (EAAA…WPPV), and 105–130 (SVKS…GSNS). The EAR-like (transcriptional repression) motif lies at 12 to 16 (LRLGL). Over residues 52–61 (EAAAGKAEAP) the composition is skewed to low complexity. A compositionally biased stretch (basic and acidic residues) spans 62-81 (AAEKAKRPAEAAAADAEKPP). The span at 117–130 (QQQQPAANASGSNS) shows a compositional bias: low complexity. A PB1 domain is found at 131–218 (SAFVKVSMDG…SCKRLRIMKG (88 aa)).

This sequence belongs to the Aux/IAA family. In terms of assembly, homodimers and heterodimers.

It is found in the nucleus. Functionally, aux/IAA proteins are short-lived transcriptional factors that function as repressors of early auxin response genes at low auxin concentrations. The chain is Auxin-responsive protein IAA13 (IAA13) from Oryza sativa subsp. japonica (Rice).